The sequence spans 85 residues: Large ribosomal subunit protein bL27 (85 aa).

Residues 1-21 (MAHKKAAGSSRNGRDSESKRL) form a disordered region.

It belongs to the bacterial ribosomal protein bL27 family.

The sequence is that of Large ribosomal subunit protein bL27 from Chromohalobacter salexigens (strain ATCC BAA-138 / DSM 3043 / CIP 106854 / NCIMB 13768 / 1H11).